A 339-amino-acid polypeptide reads, in one-letter code: Anthranilate phosphoribosyltransferase (339 aa).

5-phospho-alpha-D-ribose 1-diphosphate is bound by residues Gly79, 82–83 (GD), Thr87, 89–92 (NIST), 107–115 (KHGNRAVSS), and Ser119. Anthranilate is bound at residue Gly79. A Mg(2+)-binding site is contributed by Ser91. Asn110 lines the anthranilate pocket. Arg165 provides a ligand contact to anthranilate. Asp224 and Glu225 together coordinate Mg(2+).

The protein belongs to the anthranilate phosphoribosyltransferase family. In terms of assembly, homodimer. Mg(2+) is required as a cofactor.

The catalysed reaction is N-(5-phospho-beta-D-ribosyl)anthranilate + diphosphate = 5-phospho-alpha-D-ribose 1-diphosphate + anthranilate. Its pathway is amino-acid biosynthesis; L-tryptophan biosynthesis; L-tryptophan from chorismate: step 2/5. Its function is as follows. Catalyzes the transfer of the phosphoribosyl group of 5-phosphorylribose-1-pyrophosphate (PRPP) to anthranilate to yield N-(5'-phosphoribosyl)-anthranilate (PRA). This is Anthranilate phosphoribosyltransferase from Geobacillus thermodenitrificans (strain NG80-2).